The sequence spans 277 residues: Putative phosphoenolpyruvate synthase regulatory protein (277 aa).

Residue 157–164 (GVSRCGKT) participates in ADP binding.

The protein belongs to the pyruvate, phosphate/water dikinase regulatory protein family. PSRP subfamily.

It carries out the reaction [pyruvate, water dikinase] + ADP = [pyruvate, water dikinase]-phosphate + AMP + H(+). The catalysed reaction is [pyruvate, water dikinase]-phosphate + phosphate + H(+) = [pyruvate, water dikinase] + diphosphate. Functionally, bifunctional serine/threonine kinase and phosphorylase involved in the regulation of the phosphoenolpyruvate synthase (PEPS) by catalyzing its phosphorylation/dephosphorylation. In Enterobacter sp. (strain 638), this protein is Putative phosphoenolpyruvate synthase regulatory protein.